Reading from the N-terminus, the 214-residue chain is MGNPVLIGVAGGSGSGKTTVAKELYRQFQNDSVTMIEQDSYYKDQSHLSPEERALTNYDHPFAFDNDLLLAHLQELMQGKAIQKPIYDFKVHNRKPEQIQVDPKDVIILEGMLILEDERIRNLMDIKVYVDTDADVRIARRIVRDIEERGRSLDSVVTQYLNVVRPMHLQFIEPTKRYADVIIPEGGYNRVALDLLSTKIGNILLEKQQFTNQS.

Residue 11-18 (GGSGSGKT) participates in ATP binding.

The protein belongs to the uridine kinase family.

Its subcellular location is the cytoplasm. It carries out the reaction uridine + ATP = UMP + ADP + H(+). The enzyme catalyses cytidine + ATP = CMP + ADP + H(+). It functions in the pathway pyrimidine metabolism; CTP biosynthesis via salvage pathway; CTP from cytidine: step 1/3. It participates in pyrimidine metabolism; UMP biosynthesis via salvage pathway; UMP from uridine: step 1/1. This is Uridine kinase from Brevibacillus brevis (strain 47 / JCM 6285 / NBRC 100599).